Reading from the N-terminus, the 494-residue chain is tRNA-2-methylthio-N(6)-dimethylallyladenosine synthase (494 aa).

One can recognise an MTTase N-terminal domain in the interval arginine 4–histidine 120. Residues cysteine 13, cysteine 49, cysteine 83, cysteine 157, cysteine 161, and cysteine 164 each coordinate [4Fe-4S] cluster. The Radical SAM core domain maps to arginine 143–glutamate 374. The 74-residue stretch at arginine 376–leucine 449 folds into the TRAM domain. The interval arginine 465–arginine 494 is disordered.

Belongs to the methylthiotransferase family. MiaB subfamily. In terms of assembly, monomer. The cofactor is [4Fe-4S] cluster.

The protein resides in the cytoplasm. It catalyses the reaction N(6)-dimethylallyladenosine(37) in tRNA + (sulfur carrier)-SH + AH2 + 2 S-adenosyl-L-methionine = 2-methylsulfanyl-N(6)-dimethylallyladenosine(37) in tRNA + (sulfur carrier)-H + 5'-deoxyadenosine + L-methionine + A + S-adenosyl-L-homocysteine + 2 H(+). In terms of biological role, catalyzes the methylthiolation of N6-(dimethylallyl)adenosine (i(6)A), leading to the formation of 2-methylthio-N6-(dimethylallyl)adenosine (ms(2)i(6)A) at position 37 in tRNAs that read codons beginning with uridine. This chain is tRNA-2-methylthio-N(6)-dimethylallyladenosine synthase, found in Parafrankia sp. (strain EAN1pec).